The primary structure comprises 264 residues: 14-3-3-like protein GF14-A (264 aa).

Positions 245 to 264 are disordered; that stretch reads DMQDDGGDEMRDATKPEDEH. Residues 252-264 show a composition bias toward basic and acidic residues; the sequence is DEMRDATKPEDEH.

The protein belongs to the 14-3-3 family.

Is associated with a DNA binding complex that binds to the G box, a well-characterized cis-acting DNA regulatory element found in plant genes. This Oryza sativa subsp. japonica (Rice) protein is 14-3-3-like protein GF14-A (GF14A).